The chain runs to 417 residues: Serine hydroxymethyltransferase 2 (417 aa).

(6S)-5,6,7,8-tetrahydrofolate-binding positions include Leu121 and 125–127 (GHL). Position 230 is an N6-(pyridoxal phosphate)lysine (Lys230). A (6S)-5,6,7,8-tetrahydrofolate-binding site is contributed by 355-357 (SPF).

Belongs to the SHMT family. In terms of assembly, homodimer. Requires pyridoxal 5'-phosphate as cofactor.

It localises to the cytoplasm. It catalyses the reaction (6R)-5,10-methylene-5,6,7,8-tetrahydrofolate + glycine + H2O = (6S)-5,6,7,8-tetrahydrofolate + L-serine. It participates in one-carbon metabolism; tetrahydrofolate interconversion. It functions in the pathway amino-acid biosynthesis; glycine biosynthesis; glycine from L-serine: step 1/1. Functionally, catalyzes the reversible interconversion of serine and glycine with tetrahydrofolate (THF) serving as the one-carbon carrier. This reaction serves as the major source of one-carbon groups required for the biosynthesis of purines, thymidylate, methionine, and other important biomolecules. Also exhibits THF-independent aldolase activity toward beta-hydroxyamino acids, producing glycine and aldehydes, via a retro-aldol mechanism. This chain is Serine hydroxymethyltransferase 2, found in Pseudomonas savastanoi pv. phaseolicola (strain 1448A / Race 6) (Pseudomonas syringae pv. phaseolicola (strain 1448A / Race 6)).